A 516-amino-acid chain; its full sequence is Potassium voltage-gated channel subfamily A member 10 (516 aa).

Residues 223 to 244 (VALVSVLVIVISIIIFCMETLP) traverse the membrane as a helical segment. An N-linked (GlcNAc...) asparagine glycan is attached at N261. Residues 276-296 (FFVIETACIIWFSFELFVRFI) traverse the membrane as a helical segment. Residues 308–328 (IMNIIDIVSIIPYFVTLTTEL) traverse the membrane as a helical segment. N339 carries N-linked (GlcNAc...) asparagine glycosylation. A helical; Voltage-sensor transmembrane segment spans residues 344 to 363 (ILRIIRLVRVFRIFKLSRHS). A helical transmembrane segment spans residues 380–400 (LGLLIFFLFIGVILFSSAVYF). The short motif at 426–431 (TVGYGD) is the Selectivity filter element. The helical transmembrane segment at 441-461 (IVGTLCAIAGVLTIALPVPVI) threads the bilayer. N503 carries N-linked (GlcNAc...) asparagine glycosylation.

It belongs to the potassium channel family. A (Shaker) (TC 1.A.1.2) subfamily. Kv1.8/KCNA10 sub-subfamily. In terms of assembly, homotetramer. In terms of tissue distribution, detected in brain, cochlear sensory epithelium, cochlear ganglion, tegumentum vasculosum. Detected at low levels in cochlear lagena.

The protein resides in the membrane. It catalyses the reaction K(+)(in) = K(+)(out). With respect to regulation, the channel activity is up-regulated by cAMP. Voltage-gated potassium ion channel that mediates K(+) permeability of excitable membranes. When opened in response to the voltage difference across the membrane, KCNA10 channel selectively allows the flow of potassium ions across the membrane down their electrochemical gradient. In Gallus gallus (Chicken), this protein is Potassium voltage-gated channel subfamily A member 10 (KCNA10).